A 68-amino-acid polypeptide reads, in one-letter code: Putative membrane protein insertion efficiency factor (68 aa).

This sequence belongs to the UPF0161 family.

It is found in the cell membrane. Could be involved in insertion of integral membrane proteins into the membrane. This chain is Putative membrane protein insertion efficiency factor, found in Syntrophomonas wolfei subsp. wolfei (strain DSM 2245B / Goettingen).